A 398-amino-acid chain; its full sequence is S-adenosylmethionine synthase (398 aa).

Histidine 16 is a binding site for ATP. Aspartate 18 is a Mg(2+) binding site. Glutamate 51 is a K(+) binding site. Residues glutamate 64 and glutamine 108 each contribute to the L-methionine site. Positions 108-118 (QSADIAQGVDA) are flexible loop. ATP-binding positions include 176 to 178 (DSK), 242 to 243 (KF), aspartate 251, 257 to 258 (RK), alanine 274, and lysine 278. Aspartate 251 serves as a coordination point for L-methionine. Lysine 282 contacts L-methionine.

Belongs to the AdoMet synthase family. Homotetramer; dimer of dimers. It depends on Mg(2+) as a cofactor. K(+) serves as cofactor.

It localises to the cytoplasm. The catalysed reaction is L-methionine + ATP + H2O = S-adenosyl-L-methionine + phosphate + diphosphate. It functions in the pathway amino-acid biosynthesis; S-adenosyl-L-methionine biosynthesis; S-adenosyl-L-methionine from L-methionine: step 1/1. In terms of biological role, catalyzes the formation of S-adenosylmethionine (AdoMet) from methionine and ATP. The overall synthetic reaction is composed of two sequential steps, AdoMet formation and the subsequent tripolyphosphate hydrolysis which occurs prior to release of AdoMet from the enzyme. The sequence is that of S-adenosylmethionine synthase from Rhodopseudomonas palustris (strain BisB5).